Consider the following 77-residue polypeptide: Dermatoxin-S1 (77 aa).

The signal sequence occupies residues 1–22 (MAFLKKSLFLILFLGLVPLSFC). Positions 23–44 (ENDKREGENEEEQDDDQSEEKR) are excised as a propeptide. Residue Gln-76 is modified to Glutamine amide.

As to expression, expressed by the skin glands.

The protein localises to the secreted. It is found in the target cell membrane. Antimicrobial peptide with potent activity against Gram-positive bacteria B.megaterium, C.glutamicum and S.aureus and mollicutes A.laidlawii and S.melliferum. Less active against Gram-negative bacteria B.cepacia, P.aeruginosa, S.typhimurium and S.meliloti. Probably acts by disturbing membrane functions with its amphipathic structure. In Phyllomedusa sauvagei (Sauvage's leaf frog), this protein is Dermatoxin-S1.